The chain runs to 202 residues: Nucleoside triphosphate pyrophosphatase (202 aa).

Aspartate 79 (proton acceptor) is an active-site residue.

This sequence belongs to the Maf family. Requires a divalent metal cation as cofactor.

The protein resides in the cytoplasm. The enzyme catalyses a ribonucleoside 5'-triphosphate + H2O = a ribonucleoside 5'-phosphate + diphosphate + H(+). The catalysed reaction is a 2'-deoxyribonucleoside 5'-triphosphate + H2O = a 2'-deoxyribonucleoside 5'-phosphate + diphosphate + H(+). Its function is as follows. Nucleoside triphosphate pyrophosphatase. May have a dual role in cell division arrest and in preventing the incorporation of modified nucleotides into cellular nucleic acids. This Rhodopseudomonas palustris (strain ATCC BAA-98 / CGA009) protein is Nucleoside triphosphate pyrophosphatase.